Reading from the N-terminus, the 218-residue chain is Oxidoreductase claN (218 aa).

Lysine 38, aspartate 57, and asparagine 82 together coordinate NADP(+). The active-site Proton donor is serine 134. Positions 148, 152, and 183 each coordinate NADP(+). Tyrosine 148 (proton acceptor) is an active-site residue. Catalysis depends on lysine 152, which acts as the Lowers pKa of active site Tyr.

The protein belongs to the short-chain dehydrogenases/reductases (SDR) family.

Its pathway is pigment biosynthesis. Its function is as follows. Oxidoreductase; part of the gene cluster that mediates the biosynthesis of the bianthraquinone cladofulvin, a conidial pigment not required for virulence but that plays a role in fitness and resistance to environmental stresses including UV light and low-temperature stress. The pathway begins with the synthesis of atrochrysone thioester by the polyketide synthase (PKS) claG. The atrochrysone carboxyl ACP thioesterase claF then breaks the thioester bond and releases the atrochrysone carboxylic acid from claG. This compound is decarboxylated by claH to yield emodin, which is further converted to chrysophanol hydroquinone by the reductase claC and the dehydratase claB. The cytochrome P450 monooxygenase claM then catalyzes the dimerization of nataloe-emodin to cladofulvin. The chain is Oxidoreductase claN from Passalora fulva (Tomato leaf mold).